Consider the following 151-residue polypeptide: MKVAFLKDVPGRGKTGDVKEVNDGYARNYLIPNKLAMPASASVTSEIAAKQAAEDRRKAKAEAEMAQLAKELDGTNVSIKAKTGAKDKLYGQVTTTVIAAEIEKQTGKAIDKRKLELSEPIRQLGSYEVVIRFNKDLSSKINLIITAEENT.

Belongs to the bacterial ribosomal protein bL9 family.

Its function is as follows. Binds to the 23S rRNA. The protein is Large ribosomal subunit protein bL9 of Dehalococcoides mccartyi (strain ATCC BAA-2266 / KCTC 15142 / 195) (Dehalococcoides ethenogenes (strain 195)).